Here is a 91-residue protein sequence, read N- to C-terminus: Large ribosomal subunit protein bL31B (91 aa).

This sequence belongs to the bacterial ribosomal protein bL31 family. Type B subfamily. As to quaternary structure, part of the 50S ribosomal subunit.

This is Large ribosomal subunit protein bL31B from Neisseria meningitidis serogroup A / serotype 4A (strain DSM 15465 / Z2491).